A 173-amino-acid polypeptide reads, in one-letter code: Regulator of ribonuclease activity A (173 aa).

The protein belongs to the RraA family. In terms of assembly, homotrimer. Binds to both RNA-binding sites in the C-terminal region of Rne and to RhlB.

Its subcellular location is the cytoplasm. Globally modulates RNA abundance by binding to RNase E (Rne) and regulating its endonucleolytic activity. Can modulate Rne action in a substrate-dependent manner by altering the composition of the degradosome. Modulates RNA-binding and helicase activities of the degradosome. The protein is Regulator of ribonuclease activity A of Vibrio vulnificus (strain CMCP6).